The primary structure comprises 268 residues: Phosphatidylglycerol--prolipoprotein diacylglyceryl transferase (268 aa).

A run of 4 helical transmembrane segments spans residues 14–34 (LGPI…FAGW), 57–77 (LTFY…IIFY), 90–110 (FFLW…LIAF), and 117–137 (IGAN…IGLG). Residue Arg140 participates in a 1,2-diacyl-sn-glycero-3-phospho-(1'-sn-glycerol) binding. A run of 3 helical transmembrane segments spans residues 174–194 (QLFE…LVTI), 200–220 (YLVL…CEFF), and 240–260 (ILSI…FIKI).

Belongs to the Lgt family.

It localises to the cell inner membrane. The enzyme catalyses L-cysteinyl-[prolipoprotein] + a 1,2-diacyl-sn-glycero-3-phospho-(1'-sn-glycerol) = an S-1,2-diacyl-sn-glyceryl-L-cysteinyl-[prolipoprotein] + sn-glycerol 1-phosphate + H(+). Its pathway is protein modification; lipoprotein biosynthesis (diacylglyceryl transfer). Its function is as follows. Catalyzes the transfer of the diacylglyceryl group from phosphatidylglycerol to the sulfhydryl group of the N-terminal cysteine of a prolipoprotein, the first step in the formation of mature lipoproteins. The protein is Phosphatidylglycerol--prolipoprotein diacylglyceryl transferase of Francisella tularensis subsp. tularensis (strain FSC 198).